The sequence spans 193 residues: Phosphoheptose isomerase (193 aa).

The SIS domain occupies 37 to 193 (LAASFKADGK…QLIEKEMASV (157 aa)). 52–54 (NGG) contacts substrate. 2 residues coordinate Zn(2+): His-61 and Glu-65. Residues Glu-65, 93–94 (ND), 119–121 (STS), Ser-124, and Gln-172 each bind substrate. Gln-172 and His-180 together coordinate Zn(2+).

The protein belongs to the SIS family. GmhA subfamily. Homotetramer. Zn(2+) serves as cofactor.

It is found in the cytoplasm. It carries out the reaction 2 D-sedoheptulose 7-phosphate = D-glycero-alpha-D-manno-heptose 7-phosphate + D-glycero-beta-D-manno-heptose 7-phosphate. The protein operates within carbohydrate biosynthesis; D-glycero-D-manno-heptose 7-phosphate biosynthesis; D-glycero-alpha-D-manno-heptose 7-phosphate and D-glycero-beta-D-manno-heptose 7-phosphate from sedoheptulose 7-phosphate: step 1/1. Functionally, catalyzes the isomerization of sedoheptulose 7-phosphate in D-glycero-D-manno-heptose 7-phosphate. The polypeptide is Phosphoheptose isomerase (Edwardsiella ictaluri (strain 93-146)).